A 695-amino-acid chain; its full sequence is NADPH--cytochrome P450 reductase (695 aa).

Residues 1 to 8 (MAQLDTLD) lie on the Lumenal side of the membrane. The chain crosses the membrane as a helical span at residues 9 to 31 (VVVLAVLLAGSIAYFTKGTFWAV). Residues 32–695 (AKDPYASSGP…SGSYQEDVWS (664 aa)) lie on the Cytoplasmic side of the membrane. The 156-residue stretch at 66 to 221 (CVIFYGSQTG…DFLAWKEPMW (156 aa)) folds into the Flavodoxin-like domain. FMN contacts are provided by residues 72-77 (SQTGTA), 123-126 (ATYG), 169-178 (LGNNTYEHYN), and Asp-204. Residues 277–538 (HNPYIAPIVE…HVRHSNFKLP (262 aa)) enclose the FAD-binding FR-type domain. Position 296 (Arg-296) interacts with NADP(+). FAD is bound by residues 451-454 (RYYS), 469-471 (TAV), and 486-489 (GVTT). A disordered region spans residues 497–516 (QKQNGDPSPDPHGQTYAING). NADP(+) contacts are provided by residues Thr-552, 614 to 615 (SR), 620 to 624 (KVYVQ), and Glu-656. Trp-694 contributes to the FAD binding site.

This sequence belongs to the NADPH--cytochrome P450 reductase family. In the N-terminal section; belongs to the flavodoxin family. The protein in the C-terminal section; belongs to the flavoprotein pyridine nucleotide cytochrome reductase family. It depends on FAD as a cofactor. The cofactor is FMN.

The protein resides in the endoplasmic reticulum membrane. The protein localises to the mitochondrion outer membrane. It localises to the cell membrane. The enzyme catalyses 2 oxidized [cytochrome P450] + NADPH = 2 reduced [cytochrome P450] + NADP(+) + H(+). Functionally, this enzyme is required for electron transfer from NADP to cytochrome P450 in microsomes. It can also provide electron transfer to heme oxygenase and cytochrome B5. Involved in ergosterol biosynthesis. The polypeptide is NADPH--cytochrome P450 reductase (Emericella nidulans (strain FGSC A4 / ATCC 38163 / CBS 112.46 / NRRL 194 / M139) (Aspergillus nidulans)).